Reading from the N-terminus, the 821-residue chain is V-type proton ATPase subunit a3 (821 aa).

Ala-2 bears the N-acetylalanine mark. Over Ala-2–Thr-421 the chain is Cytoplasmic. Positions Lys-97 to Ala-144 form a coiled coil. At Ser-174 the chain carries Phosphoserine. The helical transmembrane segment at Phe-422–Ala-442 threads the bilayer. Residues Thr-443 to Arg-469 lie on the Vacuolar side of the membrane. The helical transmembrane segment at Tyr-470 to Phe-490 threads the bilayer. Residues Ser-491–Lys-548 are Cytoplasmic-facing. Residues Met-549–Ala-569 traverse the membrane as a helical segment. Residues Arg-570 to Gln-581 lie on the Vacuolar side of the membrane. A helical transmembrane segment spans residues Phe-582–Ile-602. At Lys-603–Gln-640 the chain is on the cytoplasmic side. Residues Leu-641–Ile-661 traverse the membrane as a helical segment. The Vacuolar portion of the chain corresponds to Leu-662–Pro-758. Residues Leu-759–Met-779 traverse the membrane as a helical segment. Residues Glu-780–Glu-821 are Cytoplasmic-facing.

This sequence belongs to the V-ATPase 116 kDa subunit family. In terms of assembly, V-ATPase is a heteromultimeric enzyme composed of a peripheral catalytic V1 complex (components A to H) attached to an integral membrane V0 proton pore complex (components: a, c, c'', d and e). Expressed in etiolated seedlings hypocotyls.

The protein localises to the vacuole membrane. In terms of biological role, essential component of the vacuolar proton pump (V-ATPase), a multimeric enzyme that catalyzes the translocation of protons across the membranes. Required for assembly and activity of the V-ATPase. Involved in vacuolar nutrient storage (e.g. accumulation and storage of nitrate) and in tolerance to some toxic ions (e.g. zinc ions sequestration in vacuoles). The polypeptide is V-type proton ATPase subunit a3 (VHA-a3) (Arabidopsis thaliana (Mouse-ear cress)).